The sequence spans 357 residues: MKGVLLSGGTGSRLRPITHTGPKQLVPVANKPVLEYAVEDLKEAGITEIGVILGHKGREEIQNLLGDGSDYGVEITYIVQGNPLGLAHAAGCAKDFVGDDDFVMYLGDNILKEGVVDLVESFESGDFGAGIALQEVENPQQFGIADVDDQGNVTQLIEKPDEPPTNLALIGMYVFSPAVFDAIEQLEPSWRGELEITDAIQSLLEDGYAIDSHVVEGWWKDTGKPEDILEANQLVLEDKSLKKRGTVSDDATVDGRIELAESATIEDGAVVRGPVSIADGAVIKSGTYVGPYTSVGPNSTLEGVHIENSVVIGESSINTSGRIVDSLLGKGANIGSADDFLPEGRRLVVGENSQLKL.

Positions 108 and 221 each coordinate Mg(2+).

The protein belongs to the glucose-1-phosphate thymidylyltransferase family. Requires Mg(2+) as cofactor.

It functions in the pathway protein modification; protein glycosylation. It participates in cell surface structure biogenesis; S-layer biogenesis. In terms of biological role, nucleotidyltransferase involved in N-glycan biosynthetic pathway that takes place under low-salt conditions (1.75 M instead of 3.4 M). Participates in the formation of the tetrasaccharide present at 'Asn-532' of S-layer glycoprotein Csg, consisting of a sulfated hexose, 2 hexoses and rhamnose. Involved in the addition of final rhamnose (sugar 4) of the tetrasaccharide on the dolichol phosphate carrier. The chain is Low-salt glycan biosynthesis nucleotidyltransferase Agl11 (agl11) from Haloferax volcanii (strain ATCC 29605 / DSM 3757 / JCM 8879 / NBRC 14742 / NCIMB 2012 / VKM B-1768 / DS2) (Halobacterium volcanii).